Reading from the N-terminus, the 386-residue chain is MGCLFSVNSKKVRIFDTTLRDGEQAPGIDLTVDQKIRVAKRLAELGVDVIEAGFPASSDGEFEATKKILSEIGDQVEVTGLSRSVKQDIDRTIDTGLSSIHIFIATSDIHLKYKLKMTREEVLNRIYESVRYAKDHGLIVEYSPEDATRSDEEFLLKAVKTAIDAGADRINIPDTVGVMHPFKFYDLISKIVKVTGDKIVSVHCHNDFGLATANSIAGVMAGARQVHVTVNGIGERAGNASLEEVVMSLKKLLGYDVGVRTYLLYEVSRYVAELTGVPVPYFKAIVGENAFGHEAGIHVHGVIENPMTYEPISPEEVGNFRRIALGKHSGIHGLKRLLEEQGIFLDDTQLREVLKEIKSLAEAGNKVTSADAKAIAIKVINKKITA.

In terms of domain architecture, Pyruvate carboxyltransferase spans 12–265 (VRIFDTTLRD…DVGVRTYLLY (254 aa)). Positions 21, 203, 205, and 239 each coordinate a divalent metal cation.

The protein belongs to the alpha-IPM synthase/homocitrate synthase family. As to quaternary structure, homodimer. A divalent metal cation serves as cofactor.

The enzyme catalyses 3-methyl-2-oxobutanoate + acetyl-CoA + H2O = (2S)-2-isopropylmalate + CoA + H(+). The protein operates within amino-acid biosynthesis; L-leucine biosynthesis; L-leucine from 3-methyl-2-oxobutanoate: step 1/4. Is not inhibited by leucine. Functionally, catalyzes the condensation of the acetyl group of acetyl-CoA with 3-methyl-2-oxobutanoate (2-oxoisovalerate) to form 3-carboxy-3-hydroxy-4-methylpentanoate (2-isopropylmalate). Carries out the first step of the leucine biosynthesis pathway. Also displays a low citramalate synthase activity, using pyruvate as substrate, but is unable to use 2-oxoglutarate. The protein is 2-isopropylmalate synthase of Sulfolobus acidocaldarius (strain ATCC 33909 / DSM 639 / JCM 8929 / NBRC 15157 / NCIMB 11770).